The sequence spans 398 residues: Odorant receptor 59b (398 aa).

The Cytoplasmic segment spans residues 1-46 (MAVFKLIKPAPLTEKVQSRQGNIYLYRAMWLIGWIPPKEGVLRYVY). Residues 47 to 67 (LFWTCVPFAFGVFYLPVGFII) form a helical membrane-spanning segment. The Extracellular segment spans residues 68–84 (SYVQEFKNFTPGEFLTS). Residues 85–105 (LQVCINVYGASVKSTITYLFL) form a helical membrane-spanning segment. Residues 106–141 (WRLRKTEILLDSLDKRLANDSDRERIHNMVARCNYA) lie on the Cytoplasmic side of the membrane. The helical transmembrane segment at 142–162 (FLIYSFIYCGYAGSTFLSYAL) threads the bilayer. Over 163–179 (SGRPPWSVYNPFIDWRD) the chain is Extracellular. The helical transmembrane segment at 180–200 (GMGSLWIQAIFEYITMSFAVL) threads the bilayer. Over 201 to 269 (QDQLSDTYPL…DMIRPMISRT (69 aa)) the chain is Cytoplasmic. A helical transmembrane segment spans residues 270–290 (IFVQFALIGSVLGLTLVNVFF). Residues 291–293 (FSN) lie on the Extracellular side of the membrane. A helical transmembrane segment spans residues 294–314 (FWKGVASLLFVITILLQTFPF). Residues 315-348 (CYTCNMLIDDAQDLSNEIFQSNWVDAEPRYKATL) lie on the Cytoplasmic side of the membrane. A helical membrane pass occupies residues 349–369 (VLFMHHVQQPIIFIAGGIFPI). At 370–398 (SMNSNITVAKFAFSIITIVRQMNLAEQFQ) the chain is on the extracellular side. The N-linked (GlcNAc...) asparagine glycan is linked to N374.

Belongs to the insect chemoreceptor superfamily. Heteromeric odorant receptor channel (TC 1.A.69) family. Or2a subfamily. In terms of assembly, interacts with Orco. Complexes exist early in the endomembrane system in olfactory sensory neurons (OSNs), coupling these complexes to the conserved ciliary trafficking pathway. As to expression, expressed in olfactory sensory neurons in the antenna.

It localises to the cell membrane. In terms of biological role, odorant receptor which mediates acceptance or avoidance behavior, depending on its substrates. The odorant receptor repertoire encodes a large collection of odor stimuli that vary widely in identity, intensity, and duration. Forms a complex with Orco to form odorant-sensing units, providing sensitive and prolonged odorant signaling and calcium permeability. Also plays a role in the response to N,N-Diethyl-meta-toluamide (DEET), the most widely used insect repellent worldwide. The sequence is that of Odorant receptor 59b (Or59b) from Drosophila melanogaster (Fruit fly).